Here is a 301-residue protein sequence, read N- to C-terminus: Bifunctional protein FolD (301 aa).

Residues 169-171 (GRS), Ser194, and Ile235 each bind NADP(+).

It belongs to the tetrahydrofolate dehydrogenase/cyclohydrolase family. In terms of assembly, homodimer.

It carries out the reaction (6R)-5,10-methylene-5,6,7,8-tetrahydrofolate + NADP(+) = (6R)-5,10-methenyltetrahydrofolate + NADPH. The catalysed reaction is (6R)-5,10-methenyltetrahydrofolate + H2O = (6R)-10-formyltetrahydrofolate + H(+). Its pathway is one-carbon metabolism; tetrahydrofolate interconversion. Catalyzes the oxidation of 5,10-methylenetetrahydrofolate to 5,10-methenyltetrahydrofolate and then the hydrolysis of 5,10-methenyltetrahydrofolate to 10-formyltetrahydrofolate. The protein is Bifunctional protein FolD of Gloeothece citriformis (strain PCC 7424) (Cyanothece sp. (strain PCC 7424)).